Consider the following 55-residue polypeptide: uncharacterized protein (55 aa).

This is an uncharacterized protein from Saccharomyces cerevisiae (strain ATCC 204508 / S288c) (Baker's yeast).